Here is a 749-residue protein sequence, read N- to C-terminus: Probable serine/threonine-protein kinase drkC (749 aa).

The first 31 residues, 1–31 (MIIINKYIRMNKIAILFSFFILICCTGYSIS), serve as a signal peptide directing secretion. The Extracellular segment spans residues 32 to 423 (YKINGINENK…TSPNYQKIIY (392 aa)). Residues 124 to 153 (DRTDQVSTSSSSSSFSEENKKSSSDDSAPA) are disordered. A compositionally biased stretch (low complexity) spans 130 to 139 (STSSSSSSFS). N157, N189, N283, N358, N373, N381, and N397 each carry an N-linked (GlcNAc...) asparagine glycan. A helical transmembrane segment spans residues 424–444 (IVVGVGIAVLLIIAVGIYFII). Residues 445–749 (RLRIKNKRLN…QEIVKRLEAM (305 aa)) lie on the Cytoplasmic side of the membrane. Residues 491-749 (IVVQNRIGRG…QEIVKRLEAM (259 aa)) enclose the Protein kinase domain. Residues 497–505 (IGRGSCAEV) and K518 contribute to the ATP site. D615 (proton acceptor) is an active-site residue.

It belongs to the protein kinase superfamily. TKL Ser/Thr protein kinase family.

The protein resides in the membrane. It carries out the reaction L-seryl-[protein] + ATP = O-phospho-L-seryl-[protein] + ADP + H(+). The enzyme catalyses L-threonyl-[protein] + ATP = O-phospho-L-threonyl-[protein] + ADP + H(+). The polypeptide is Probable serine/threonine-protein kinase drkC (drkC) (Dictyostelium discoideum (Social amoeba)).